A 447-amino-acid polypeptide reads, in one-letter code: Tubulin beta-1 chain (447 aa).

Gln-11, Glu-69, Ser-138, Gly-142, Thr-143, Gly-144, Asn-204, and Asn-226 together coordinate GTP. Position 69 (Glu-69) interacts with Mg(2+).

The protein belongs to the tubulin family. In terms of assembly, dimer of alpha and beta chains. A typical microtubule is a hollow water-filled tube with an outer diameter of 25 nm and an inner diameter of 15 nM. Alpha-beta heterodimers associate head-to-tail to form protofilaments running lengthwise along the microtubule wall with the beta-tubulin subunit facing the microtubule plus end conferring a structural polarity. Microtubules usually have 13 protofilaments but different protofilament numbers can be found in some organisms and specialized cells. It depends on Mg(2+) as a cofactor.

The protein resides in the cytoplasm. It is found in the cytoskeleton. Functionally, tubulin is the major constituent of microtubules, a cylinder consisting of laterally associated linear protofilaments composed of alpha- and beta-tubulin heterodimers. Microtubules grow by the addition of GTP-tubulin dimers to the microtubule end, where a stabilizing cap forms. Below the cap, tubulin dimers are in GDP-bound state, owing to GTPase activity of alpha-tubulin. The chain is Tubulin beta-1 chain from Geotrichum candidum (Oospora lactis).